The primary structure comprises 198 residues: DNA polymerase zeta subunit 2 (198 aa).

The 193-residue stretch at 4 to 196 (EIKADIIVEA…DLGLKMDVLI (193 aa)) folds into the HORMA domain.

Belongs to the MAD2 family. In terms of assembly, accessory subunit of the zeta DNA polymerase complex, which consists of the catalytic component PolZ1/DNApol-zeta and PolZ2/Rev7. Interacts with the apurinic/apyrimidinic (AP) endonuclease Rrp1 (via the N-terminus).

Functionally, as the accessory component of the DNA polymerase zeta complex, involved in translesion DNA synthesis (TLS) and various DNA repair mechanisms. Promotes the apurinic/apyrimidinic (AP) endonuclease activity of Rrp1 and is therefore likely to be involved in the base excision repair (BER) pathway responsible for repair of DNA lesions. It does not appear to influence the synthesis activity of the catalytic component Dmpol-zeta. The sequence is that of DNA polymerase zeta subunit 2 from Drosophila melanogaster (Fruit fly).